The chain runs to 509 residues: Galactose-1-phosphate uridylyltransferase (509 aa).

Belongs to the galactose-1-phosphate uridylyltransferase type 2 family.

It localises to the cytoplasm. The enzyme catalyses alpha-D-galactose 1-phosphate + UDP-alpha-D-glucose = alpha-D-glucose 1-phosphate + UDP-alpha-D-galactose. Its pathway is carbohydrate metabolism; galactose metabolism. The sequence is that of Galactose-1-phosphate uridylyltransferase from Fusobacterium nucleatum subsp. nucleatum (strain ATCC 25586 / DSM 15643 / BCRC 10681 / CIP 101130 / JCM 8532 / KCTC 2640 / LMG 13131 / VPI 4355).